The following is a 382-amino-acid chain: V-type proton ATPase subunit C 1 (382 aa).

Residue T2 is modified to N-acetylthreonine.

This sequence belongs to the V-ATPase C subunit family. As to quaternary structure, V-ATPase is a heteromultimeric enzyme made up of two complexes: the ATP-hydrolytic V1 complex and the proton translocation V0 complex. The V1 complex consists of three catalytic AB heterodimers that form a heterohexamer, three peripheral stalks each consisting of EG heterodimers, one central rotor including subunits D and F, and the regulatory subunits C and H. The proton translocation complex V0 consists of the proton transport subunit a, a ring of proteolipid subunits c9c'', rotary subunit d, subunits e and f, and two accessory subunits.

In terms of biological role, subunit of the V1 complex of vacuolar(H+)-ATPase (V-ATPase), a multisubunit enzyme composed of a peripheral complex (V1) that hydrolyzes ATP and a membrane integral complex (V0) that translocates protons. V-ATPase is responsible for acidifying and maintaining the pH of intracellular compartments and in some cell types, is targeted to the plasma membrane, where it is responsible for acidifying the extracellular environment. Subunit C is necessary for the assembly of the catalytic sector of the enzyme and is likely to have a specific function in its catalytic activity. This Xenopus tropicalis (Western clawed frog) protein is V-type proton ATPase subunit C 1 (atp6v1c1).